Consider the following 302-residue polypeptide: B3 domain-containing protein At3g17010 (302 aa).

The segment at residues 21 to 116 (FFKIFQRADL…VFHVNIYEQN (96 aa)) is a DNA-binding region (TF-B3 1). Residues 123 to 192 (PRKFQTMGPS…KVKKKSKSKS (70 aa)) form a disordered region. Residues 135-174 (IKKEEGENSLIDVKKEEESDESPGRAEFLVRKKKTEDSKS) show a composition bias toward basic and acidic residues. Residues 175-192 (SKKKMTRNKVKKKSKSKS) are compositionally biased toward basic residues. The TF-B3 2 DNA-binding region spans 199–292 (VPEFKITIRK…EFVLLTSKKN (94 aa)).

The protein resides in the nucleus. This is B3 domain-containing protein At3g17010 from Arabidopsis thaliana (Mouse-ear cress).